The primary structure comprises 189 residues: Glycerol-3-phosphate acyltransferase (189 aa).

5 helical membrane-spanning segments follow: residues 1-21, 50-70, 81-101, 111-131, and 151-171; these read MFWS…AIVL, KLAI…VLLA, AWVG…RFQG, MLMA…VLTF, and LLAW…LMIV.

The protein belongs to the PlsY family. In terms of assembly, probably interacts with PlsX.

It is found in the cell inner membrane. The catalysed reaction is an acyl phosphate + sn-glycerol 3-phosphate = a 1-acyl-sn-glycero-3-phosphate + phosphate. The protein operates within lipid metabolism; phospholipid metabolism. Its function is as follows. Catalyzes the transfer of an acyl group from acyl-phosphate (acyl-PO(4)) to glycerol-3-phosphate (G3P) to form lysophosphatidic acid (LPA). This enzyme utilizes acyl-phosphate as fatty acyl donor, but not acyl-CoA or acyl-ACP. The chain is Glycerol-3-phosphate acyltransferase from Pseudomonas entomophila (strain L48).